Reading from the N-terminus, the 616-residue chain is Dihydroxy-acid dehydratase (616 aa).

A Mg(2+)-binding site is contributed by Asp81. A [2Fe-2S] cluster-binding site is contributed by Cys122. Mg(2+) contacts are provided by Asp123 and Lys124. Lys124 carries the N6-carboxylysine modification. Residue Cys195 coordinates [2Fe-2S] cluster. Glu491 is a Mg(2+) binding site. Ser517 acts as the Proton acceptor in catalysis.

The protein belongs to the IlvD/Edd family. In terms of assembly, homodimer. Requires [2Fe-2S] cluster as cofactor. The cofactor is Mg(2+).

It carries out the reaction (2R)-2,3-dihydroxy-3-methylbutanoate = 3-methyl-2-oxobutanoate + H2O. It catalyses the reaction (2R,3R)-2,3-dihydroxy-3-methylpentanoate = (S)-3-methyl-2-oxopentanoate + H2O. Its pathway is amino-acid biosynthesis; L-isoleucine biosynthesis; L-isoleucine from 2-oxobutanoate: step 3/4. It functions in the pathway amino-acid biosynthesis; L-valine biosynthesis; L-valine from pyruvate: step 3/4. Its function is as follows. Functions in the biosynthesis of branched-chain amino acids. Catalyzes the dehydration of (2R,3R)-2,3-dihydroxy-3-methylpentanoate (2,3-dihydroxy-3-methylvalerate) into 2-oxo-3-methylpentanoate (2-oxo-3-methylvalerate) and of (2R)-2,3-dihydroxy-3-methylbutanoate (2,3-dihydroxyisovalerate) into 2-oxo-3-methylbutanoate (2-oxoisovalerate), the penultimate precursor to L-isoleucine and L-valine, respectively. The sequence is that of Dihydroxy-acid dehydratase from Blochmanniella pennsylvanica (strain BPEN).